The sequence spans 901 residues: HTH-type transcriptional regulator MalT (901 aa).

Position 39-46 (39-46 (SPAGYGKT)) interacts with ATP. Residues 829–894 (ELIRTSPLTQ…AAVQHAQKLL (66 aa)) enclose the HTH luxR-type domain. The segment at residues 853 to 872 (NEQIAGELEVAATTIKTHIR) is a DNA-binding region (H-T-H motif).

The protein belongs to the MalT family. In terms of assembly, monomer in solution. Oligomerizes to an active state in the presence of the positive effectors ATP and maltotriose.

With respect to regulation, activated by ATP and maltotriose, which are both required for DNA binding. Its function is as follows. Positively regulates the transcription of the maltose regulon whose gene products are responsible for uptake and catabolism of malto-oligosaccharides. Specifically binds to the promoter region of its target genes, recognizing a short DNA motif called the MalT box. The protein is HTH-type transcriptional regulator MalT of Shigella flexneri serotype 5b (strain 8401).